A 302-amino-acid polypeptide reads, in one-letter code: Phosphoribosylaminoimidazole-succinocarboxamide synthase (302 aa).

This sequence belongs to the SAICAR synthetase family.

The enzyme catalyses 5-amino-1-(5-phospho-D-ribosyl)imidazole-4-carboxylate + L-aspartate + ATP = (2S)-2-[5-amino-1-(5-phospho-beta-D-ribosyl)imidazole-4-carboxamido]succinate + ADP + phosphate + 2 H(+). It functions in the pathway purine metabolism; IMP biosynthesis via de novo pathway; 5-amino-1-(5-phospho-D-ribosyl)imidazole-4-carboxamide from 5-amino-1-(5-phospho-D-ribosyl)imidazole-4-carboxylate: step 1/2. In Ralstonia nicotianae (strain ATCC BAA-1114 / GMI1000) (Ralstonia solanacearum), this protein is Phosphoribosylaminoimidazole-succinocarboxamide synthase.